The following is a 242-amino-acid chain: UDP-2,3-diacylglucosamine hydrolase (242 aa).

5 residues coordinate Mn(2+): Asp8, His10, Asp41, Asn79, and His114. 79–80 is a binding site for substrate; it reads NR. Residues Asp122, Lys164, Lys167, and His195 each coordinate substrate. Residues His195 and His197 each contribute to the Mn(2+) site.

Belongs to the LpxH family. The cofactor is Mn(2+).

The protein resides in the cell inner membrane. It carries out the reaction UDP-2-N,3-O-bis[(3R)-3-hydroxytetradecanoyl]-alpha-D-glucosamine + H2O = 2-N,3-O-bis[(3R)-3-hydroxytetradecanoyl]-alpha-D-glucosaminyl 1-phosphate + UMP + 2 H(+). Its pathway is glycolipid biosynthesis; lipid IV(A) biosynthesis; lipid IV(A) from (3R)-3-hydroxytetradecanoyl-[acyl-carrier-protein] and UDP-N-acetyl-alpha-D-glucosamine: step 4/6. Hydrolyzes the pyrophosphate bond of UDP-2,3-diacylglucosamine to yield 2,3-diacylglucosamine 1-phosphate (lipid X) and UMP by catalyzing the attack of water at the alpha-P atom. Involved in the biosynthesis of lipid A, a phosphorylated glycolipid that anchors the lipopolysaccharide to the outer membrane of the cell. The polypeptide is UDP-2,3-diacylglucosamine hydrolase (Vibrio parahaemolyticus serotype O3:K6 (strain RIMD 2210633)).